Consider the following 743-residue polypeptide: Probable TonB-dependent siderophore receptor PiuA (743 aa).

The first 28 residues, M1–A28, serve as a signal peptide directing secretion. Positions P61–K167 constitute a TBDR plug domain. The TBDR beta-barrel domain maps to G172 to Y743. 2 disulfide bridges follow: C408–C416 and C627–C632.

The protein belongs to the TonB-dependent receptor family.

The protein resides in the cell outer membrane. Its function is as follows. Probably involved in the initial step of iron uptake by binding iron chelating siderophores, thereby allowing extraction of iron from the environment. May bind the siderophore, ferric enterobactin, with micromolar affinity. This chain is Probable TonB-dependent siderophore receptor PiuA, found in Acinetobacter baumannii (strain ATCC 19606 / DSM 30007 / JCM 6841 / CCUG 19606 / CIP 70.34 / NBRC 109757 / NCIMB 12457 / NCTC 12156 / 81).